The chain runs to 271 residues: Phosphatidylglycerol--prolipoprotein diacylglyceryl transferase (271 aa).

The next 4 membrane-spanning stretches (helical) occupy residues 25 to 45 (WYGI…KFFV), 60 to 80 (YFIW…ILIY), 103 to 123 (FVGI…IATL), and 131 to 151 (ANPW…YVFG). Position 152 (R152) interacts with a 1,2-diacyl-sn-glycero-3-phospho-(1'-sn-glycerol). 3 helical membrane-spanning segments follow: residues 181–201 (PSQL…VYLA), 209–229 (GELI…CEFY), and 235–255 (GIGF…IMFI).

Belongs to the Lgt family.

The protein resides in the cell inner membrane. It carries out the reaction L-cysteinyl-[prolipoprotein] + a 1,2-diacyl-sn-glycero-3-phospho-(1'-sn-glycerol) = an S-1,2-diacyl-sn-glyceryl-L-cysteinyl-[prolipoprotein] + sn-glycerol 1-phosphate + H(+). Its pathway is protein modification; lipoprotein biosynthesis (diacylglyceryl transfer). Functionally, catalyzes the transfer of the diacylglyceryl group from phosphatidylglycerol to the sulfhydryl group of the N-terminal cysteine of a prolipoprotein, the first step in the formation of mature lipoproteins. The protein is Phosphatidylglycerol--prolipoprotein diacylglyceryl transferase of Campylobacter jejuni (strain RM1221).